A 460-amino-acid chain; its full sequence is Amino acid transporter AVT6A (460 aa).

Helical transmembrane passes span Phe45–Pro65, Ala66–Leu86, Ile120–Ile140, Ala172–Ile192, Ser199–Met219, Leu238–His258, Ala281–Gly301, Leu336–Phe356, Cys371–Trp391, Phe394–Ile414, and Thr427–Ser447.

This sequence belongs to the amino acid/polyamine transporter 2 family. Amino acid/auxin permease (AAAP) (TC 2.A.18.6) subfamily.

The protein resides in the membrane. The chain is Amino acid transporter AVT6A from Arabidopsis thaliana (Mouse-ear cress).